We begin with the raw amino-acid sequence, 749 residues long: Soluble starch synthase 2-1, chloroplastic/amyloplastic (749 aa).

A chloroplast-targeting transit peptide spans 1–44 (MAAAAVSSLLAPSGSCYSPGCHSCWGPGPGGGRRLPSPRRRPIT). Residue Lys-272 coordinates ADP-alpha-D-glucose.

The protein belongs to the glycosyltransferase 1 family. Bacterial/plant glycogen synthase subfamily. As to expression, expressed in endosperm, leaves, and weakly in roots.

The protein localises to the plastid. The protein resides in the amyloplast. It is found in the chloroplast. It carries out the reaction [(1-&gt;4)-alpha-D-glucosyl](n) + ADP-alpha-D-glucose = [(1-&gt;4)-alpha-D-glucosyl](n+1) + ADP + H(+). It participates in glycan biosynthesis; starch biosynthesis. Its function is as follows. May be involved in starch synthesis in endosperm amyloplasts and contribute to the deposition of transient starch in chloroplasts of leaves. The polypeptide is Soluble starch synthase 2-1, chloroplastic/amyloplastic (SSII-1) (Oryza sativa subsp. japonica (Rice)).